Consider the following 171-residue polypeptide: Large ribosomal subunit protein uL10 (171 aa).

It belongs to the universal ribosomal protein uL10 family. Part of the ribosomal stalk of the 50S ribosomal subunit. The N-terminus interacts with L11 and the large rRNA to form the base of the stalk. The C-terminus forms an elongated spine to which L12 dimers bind in a sequential fashion forming a multimeric L10(L12)X complex.

In terms of biological role, forms part of the ribosomal stalk, playing a central role in the interaction of the ribosome with GTP-bound translation factors. The polypeptide is Large ribosomal subunit protein uL10 (Nitrosomonas europaea (strain ATCC 19718 / CIP 103999 / KCTC 2705 / NBRC 14298)).